The chain runs to 130 residues: Large ribosomal subunit protein bL17 (130 aa).

It belongs to the bacterial ribosomal protein bL17 family. Part of the 50S ribosomal subunit. Contacts protein L32.

In Nitrosomonas eutropha (strain DSM 101675 / C91 / Nm57), this protein is Large ribosomal subunit protein bL17.